A 1309-amino-acid polypeptide reads, in one-letter code: Disease resistance protein RPP2A (1309 aa).

Residues 9–173 (RRYDVFPSFS…MVADDVSKKL (165 aa)) form the TIR 1 domain. Glu-84 is a catalytic residue. In terms of domain architecture, NB-ARC 1 spans 187-418 (EAHLEAMSSI…FKKTLRNYLP (232 aa)). Residues 488–585 (PNRRHSNDDW…KECILVFSCH (98 aa)) enclose the ALOG domain. The TIR 2 domain occupies 574–737 (REKECILVFS…EVVRNASLRL (164 aa)). In terms of domain architecture, NB-ARC 2 spans 755–987 (SQSTDVEIMG…IFLDLACFFR (233 aa)). The stretch at 1114–1141 (LPHGLDTLPDELSLLHWENYPLVYLPQK) forms a coiled coil. LRR repeat units follow at residues 1145–1167 (VNLVELNMPYSNMEKLWEGKKNL), 1168–1195 (EKLKNIKLSHSRELTDILMLSEALNLEH), 1214–1237 (CGKLVSLNMKDCSRLRSLPSMVDL), 1238–1258 (TTLKLLNLSGCSEFEDIQDFA), 1259–1283 (PNLEEIYLAGTSIRELPLSIRNLTE), and 1285–1307 (VTLDLENCERLQEMPSLPVEIIR).

This sequence belongs to the disease resistance TIR-NB-LRR family.

The enzyme catalyses NAD(+) + H2O = ADP-D-ribose + nicotinamide + H(+). Disease resistance protein that cooperates with RPP2B to confer resistance to Hyaloperonospora parasitica isolate Cala2. The protein is Disease resistance protein RPP2A of Arabidopsis thaliana (Mouse-ear cress).